Consider the following 237-residue polypeptide: Flagellar L-ring protein (237 aa).

The first 24 residues, 1 to 24 (MNRLSVPRFSVLIASLCGITLLSG), serve as a signal peptide directing secretion. The N-palmitoyl cysteine moiety is linked to residue cysteine 25. Cysteine 25 carries S-diacylglycerol cysteine lipidation.

Belongs to the FlgH family. As to quaternary structure, the basal body constitutes a major portion of the flagellar organelle and consists of four rings (L,P,S, and M) mounted on a central rod.

It is found in the cell outer membrane. The protein resides in the bacterial flagellum basal body. Its function is as follows. Assembles around the rod to form the L-ring and probably protects the motor/basal body from shearing forces during rotation. This chain is Flagellar L-ring protein, found in Pseudomonas syringae pv. syringae (strain B728a).